The sequence spans 489 residues: DNA-directed RNA polymerase subunit beta' C-terminal section (489 aa).

The Mg(2+) site is built by D208, D210, and D212.

The protein belongs to the RNA polymerase beta' chain family. RpoC1 subfamily. As to quaternary structure, in plastids the minimal PEP RNA polymerase catalytic core is composed of four subunits: alpha, beta, beta', and beta''. When a (nuclear-encoded) sigma factor is associated with the core the holoenzyme is formed, which can initiate transcription. Mg(2+) serves as cofactor.

It localises to the plastid. Its subcellular location is the chloroplast. It catalyses the reaction RNA(n) + a ribonucleoside 5'-triphosphate = RNA(n+1) + diphosphate. Its function is as follows. DNA-dependent RNA polymerase catalyzes the transcription of DNA into RNA using the four ribonucleoside triphosphates as substrates. The sequence is that of DNA-directed RNA polymerase subunit beta' C-terminal section (rpoC1B) from Chlamydomonas reinhardtii (Chlamydomonas smithii).